Reading from the N-terminus, the 833-residue chain is Leucine--tRNA ligase (833 aa).

Positions 41–52 match the 'HIGH' region motif; sequence PYPSGAGLHVGH. The 'KMSKS' region motif lies at 610-614; the sequence is KMSKS. Residue Lys-613 coordinates ATP.

This sequence belongs to the class-I aminoacyl-tRNA synthetase family.

It localises to the cytoplasm. It carries out the reaction tRNA(Leu) + L-leucine + ATP = L-leucyl-tRNA(Leu) + AMP + diphosphate. The protein is Leucine--tRNA ligase of Streptococcus pyogenes serotype M12 (strain MGAS2096).